The primary structure comprises 731 residues: Catalase-peroxidase (731 aa).

Positions 98 to 227 (WHAAGTYRTA…LAAIQMGLIY (130 aa)) form a cross-link, tryptophyl-tyrosyl-methioninium (Trp-Tyr) (with M-254). Residue His-99 is the Proton acceptor of the active site. Residues 227-254 (YVNPEGPQGNPHDDEGMARDMKETFKRM) constitute a cross-link (tryptophyl-tyrosyl-methioninium (Tyr-Met) (with W-98)). His-269 provides a ligand contact to heme b.

Belongs to the peroxidase family. Peroxidase/catalase subfamily. In terms of assembly, homodimer or homotetramer. The cofactor is heme b. In terms of processing, formation of the three residue Trp-Tyr-Met cross-link is important for the catalase, but not the peroxidase activity of the enzyme.

The catalysed reaction is H2O2 + AH2 = A + 2 H2O. It carries out the reaction 2 H2O2 = O2 + 2 H2O. Its function is as follows. Bifunctional enzyme with both catalase and broad-spectrum peroxidase activity. The sequence is that of Catalase-peroxidase from Sphingopyxis alaskensis (strain DSM 13593 / LMG 18877 / RB2256) (Sphingomonas alaskensis).